The following is a 153-amino-acid chain: UPF0743 protein YCR087C-A (153 aa).

2 C2HC LYAR-type zinc fingers span residues 1 to 26 (MVTF…YRCP) and 27 to 52 (NAYY…TSCI). Residues C6, C9, H21, C25, C32, C35, H48, and C51 each coordinate Zn(2+). The disordered stretch occupies residues 63-96 (YKGNKKQKQKQQQKQQQKQHQHQPVATPAKKVEK). Residues 65 to 83 (GNKKQKQKQQQKQQQKQHQ) are compositionally biased toward basic residues.

It belongs to the UPF0743 family.

The protein localises to the nucleus. Its subcellular location is the nucleolus. The polypeptide is UPF0743 protein YCR087C-A (Saccharomyces cerevisiae (strain ATCC 204508 / S288c) (Baker's yeast)).